The following is a 154-amino-acid chain: AP-1 complex subunit sigma-3 (154 aa).

It belongs to the adaptor complexes small subunit family. As to quaternary structure, adaptor protein complex 1 (AP-1) is a heterotetramer composed of two large adaptins (gamma-type subunit AP1G1 and beta-type subunit AP1B1), a medium adaptin (mu-type subunit AP1M1 or AP1M2) and a small adaptin (sigma-type subunit AP1S1 or AP1S2 or AP1S3).

Its subcellular location is the golgi apparatus. It localises to the cytoplasmic vesicle membrane. The protein resides in the membrane. It is found in the clathrin-coated pit. Its function is as follows. Subunit of clathrin-associated adaptor protein complex 1 that plays a role in protein sorting in the late-Golgi/trans-Golgi network (TGN) and/or endosomes. The AP complexes mediate both the recruitment of clathrin to membranes and the recognition of sorting signals within the cytosolic tails of transmembrane cargo molecules. Involved in TLR3 trafficking. The protein is AP-1 complex subunit sigma-3 (Ap1s3) of Mus musculus (Mouse).